The sequence spans 344 residues: Aurora kinase B (344 aa).

Positions 1–22 are disordered; sequence MAQKENSYPWPYGRQTAPSGLS. Thr35 carries the phosphothreonine modification. Residue Ser62 is modified to Phosphoserine. Thr64 carries the post-translational modification Phosphothreonine. A Protein kinase domain is found at 77-327; sequence FEIGRPLGKG…LAQVSAHPWV (251 aa). ATP-binding positions include 83–91 and Lys106; that span reads LGKGKFGNV. The Proton acceptor role is filled by Asp200. Lys215 carries the post-translational modification N6-acetyllysine. Ser227 is modified (phosphoserine). Phosphothreonine; by autocatalysis is present on Thr232.

The protein belongs to the protein kinase superfamily. Ser/Thr protein kinase family. Aurora subfamily. As to quaternary structure, component of the chromosomal passenger complex (CPC) composed of at least BIRC5/survivin, CDCA8/borealin, INCENP, AURKB or AURKC; predominantly independent AURKB- and AURKC-containing complexes exist. Associates with RACGAP1 during M phase. Interacts with SPDYC; this interaction may be required for proper localization of active, Thr-232-phosphorylated AURKB form during prometaphase and metaphase. Interacts with p53/TP53. Interacts (via the middle kinase domain) with NOC2L (via the N- and C-terminus domains). Interacts with CDCA1. Interacts with EVI5. Interacts with JTB. Interacts with NDC80. Interacts with PSMA3. Interacts with RNF2/RING1B. Interacts with SEPTIN1. Interacts with SIRT2. Interacts with TACC1. Interacts with TTC28. In terms of processing, the phosphorylation of Thr-232 requires the binding to INCENP and occurs by means of an autophosphorylation mechanism. Thr-232 phosphorylation is indispensable for the AURKB kinase activity. Acetylated at Lys-215 by KAT5 at kinetochores, increasing AURKB activity and promoting accurate chromosome segregation in mitosis. Post-translationally, ubiquitinated by different BCR (BTB-CUL3-RBX1) E3 ubiquitin ligase complexes. Ubiquitinated by the BCR(KLHL9-KLHL13) E3 ubiquitin ligase complex, ubiquitination leads to removal from mitotic chromosomes and is required for cytokinesis. During anaphase, the BCR(KLHL21) E3 ubiquitin ligase complex recruits the CPC complex from chromosomes to the spindle midzone and mediates the ubiquitination of AURKB. Ubiquitination of AURKB by BCR(KLHL21) E3 ubiquitin ligase complex may not lead to its degradation by the proteasome. Deubiquitinated by USP35; inhibiting CDH1-mediated degradation of AURKB. As to expression, high level expression seen in the thymus. It is also expressed in the spleen, lung, testis, colon, placenta and fetal liver. Expressed during S and G2/M phase and expression is up-regulated in cancer cells during M phase. Not expressed in normal liver, high expression in metastatic liver.

Its subcellular location is the nucleus. The protein localises to the chromosome. The protein resides in the centromere. It is found in the kinetochore. It localises to the cytoplasm. Its subcellular location is the cytoskeleton. The protein localises to the spindle. The protein resides in the midbody. It catalyses the reaction L-seryl-[protein] + ATP = O-phospho-L-seryl-[protein] + ADP + H(+). The catalysed reaction is L-threonyl-[protein] + ATP = O-phospho-L-threonyl-[protein] + ADP + H(+). Its activity is regulated as follows. Activity is greatly increased when AURKB is within the CPC complex. In particular, AURKB-phosphorylated INCENP acts as an activator of AURKB. Positive feedback between HASPIN and AURKB contributes to CPC localization. Inhibited by ZM447439. In terms of biological role, serine/threonine-protein kinase component of the chromosomal passenger complex (CPC), a complex that acts as a key regulator of mitosis. The CPC complex has essential functions at the centromere in ensuring correct chromosome alignment and segregation and is required for chromatin-induced microtubule stabilization and spindle assembly. Involved in the bipolar attachment of spindle microtubules to kinetochores and is a key regulator for the onset of cytokinesis during mitosis. Required for central/midzone spindle assembly and cleavage furrow formation. Key component of the cytokinesis checkpoint, a process required to delay abscission to prevent both premature resolution of intercellular chromosome bridges and accumulation of DNA damage: phosphorylates CHMP4C, leading to retain abscission-competent VPS4 (VPS4A and/or VPS4B) at the midbody ring until abscission checkpoint signaling is terminated at late cytokinesis. AURKB phosphorylates the CPC complex subunits BIRC5/survivin, CDCA8/borealin and INCENP. Phosphorylation of INCENP leads to increased AURKB activity. Other known AURKB substrates involved in centromeric functions and mitosis are CENPA, DES/desmin, GPAF, KIF2C, NSUN2, RACGAP1, SEPTIN1, VIM/vimentin, HASPIN, and histone H3. A positive feedback loop involving HASPIN and AURKB contributes to localization of CPC to centromeres. Phosphorylation of VIM controls vimentin filament segregation in cytokinetic process, whereas histone H3 is phosphorylated at 'Ser-10' and 'Ser-28' during mitosis (H3S10ph and H3S28ph, respectively). AURKB is also required for kinetochore localization of BUB1 and SGO1. Phosphorylation of p53/TP53 negatively regulates its transcriptional activity. Key regulator of active promoters in resting B- and T-lymphocytes: acts by mediating phosphorylation of H3S28ph at active promoters in resting B-cells, inhibiting RNF2/RING1B-mediated ubiquitination of histone H2A and enhancing binding and activity of the USP16 deubiquitinase at transcribed genes. Acts as an inhibitor of CGAS during mitosis: catalyzes phosphorylation of the N-terminus of CGAS during the G2-M transition, blocking CGAS liquid phase separation and activation, and thereby preventing CGAS-induced autoimmunity. Phosphorylates KRT5 during anaphase and telophase. Phosphorylates ATXN10 which promotes phosphorylation of ATXN10 by PLK1 and may play a role in the regulation of cytokinesis and stimulating the proteasomal degradation of ATXN10. The chain is Aurora kinase B (AURKB) from Homo sapiens (Human).